The following is a 334-amino-acid chain: Ribosomal RNA small subunit methyltransferase H (334 aa).

S-adenosyl-L-methionine contacts are provided by residues glycine 39 to histidine 41, aspartate 59, phenylalanine 83, aspartate 100, and glutamine 107. Residues glutamate 303–proline 334 form a disordered region.

It belongs to the methyltransferase superfamily. RsmH family.

The protein localises to the cytoplasm. It carries out the reaction cytidine(1402) in 16S rRNA + S-adenosyl-L-methionine = N(4)-methylcytidine(1402) in 16S rRNA + S-adenosyl-L-homocysteine + H(+). In terms of biological role, specifically methylates the N4 position of cytidine in position 1402 (C1402) of 16S rRNA. The sequence is that of Ribosomal RNA small subunit methyltransferase H from Verminephrobacter eiseniae (strain EF01-2).